A 288-amino-acid polypeptide reads, in one-letter code: ATP synthase gamma chain (288 aa).

Belongs to the ATPase gamma chain family. F-type ATPases have 2 components, CF(1) - the catalytic core - and CF(0) - the membrane proton channel. CF(1) has five subunits: alpha(3), beta(3), gamma(1), delta(1), epsilon(1). CF(0) has three main subunits: a, b and c.

The protein localises to the cell inner membrane. In terms of biological role, produces ATP from ADP in the presence of a proton gradient across the membrane. The gamma chain is believed to be important in regulating ATPase activity and the flow of protons through the CF(0) complex. The polypeptide is ATP synthase gamma chain (Rickettsia felis (strain ATCC VR-1525 / URRWXCal2) (Rickettsia azadi)).